The primary structure comprises 259 residues: Phosphate import ATP-binding protein PstB 1 (259 aa).

In terms of domain architecture, ABC transporter spans 7–254 (VKPEDVYQIN…PDDHRTKDYI (248 aa)). Residue 45-52 (GPSGCGKS) participates in ATP binding.

Belongs to the ABC transporter superfamily. Phosphate importer (TC 3.A.1.7) family. As to quaternary structure, the complex is composed of two ATP-binding proteins (PstB), two transmembrane proteins (PstC and PstA) and a solute-binding protein (PstS).

The protein resides in the cell membrane. It catalyses the reaction phosphate(out) + ATP + H2O = ADP + 2 phosphate(in) + H(+). Part of the ABC transporter complex PstSACB involved in phosphate import. Responsible for energy coupling to the transport system. The protein is Phosphate import ATP-binding protein PstB 1 of Bacillus licheniformis (strain ATCC 14580 / DSM 13 / JCM 2505 / CCUG 7422 / NBRC 12200 / NCIMB 9375 / NCTC 10341 / NRRL NRS-1264 / Gibson 46).